Reading from the N-terminus, the 931-residue chain is Chitin synthase III (931 aa).

N-linked (GlcNAc...) asparagine glycosylation is found at Asn-37 and Asn-94. The tract at residues 93-154 (PNASQLPPAG…PGGVGQAGGL (62 aa)) is disordered. Residues 102–122 (GSGGFGDNGFGQYGQPQGFGG) show a composition bias toward gly residues. N-linked (GlcNAc...) asparagine glycosylation occurs at Asn-558. Helical transmembrane passes span 585-605 (FFLHIQVIYNVLNVIFSWFSL), 644-664 (IINALLKYLYLAFVILQFILA), 677-697 (IASFMVFGLIQGYILVLSGYL), 731-751 (VILIALITIYGLYFVASFLYL), and 759-779 (SFPYYMLLMSTYINILMVYAF). Asn-802 carries an N-linked (GlcNAc...) asparagine glycan. 2 helical membrane-spanning segments follow: residues 858-878 (TGLVVSWLFSNILLVVIITSD) and 899-919 (FLLYATAALSIVRFIGFLWFL).

Belongs to the chitin synthase family. Class III subfamily. Highly expressed in conidia and during appressorium formation.

The protein localises to the cell membrane. The catalysed reaction is [(1-&gt;4)-N-acetyl-beta-D-glucosaminyl](n) + UDP-N-acetyl-alpha-D-glucosamine = [(1-&gt;4)-N-acetyl-beta-D-glucosaminyl](n+1) + UDP + H(+). Polymerizes chitin, a structural polymer of the cell wall and septum, by transferring the sugar moiety of UDP-GlcNAc to the non-reducing end of the growing chitin polymer. Contributes to the production of conidia and the ability of fungal conidia to germinate. Involved in the fungal cell wall integrity and the ability of conidia to withstand biophysical pressure. Required for appressorium formation and evasion of insect cellular and/or humoral defenses, promoting the fungal dimorphic transition to the production of hyphal bodies that occurs within hosts, and ultimately to virulence. The sequence is that of Chitin synthase III from Metarhizium acridum (strain CQMa 102).